Consider the following 1694-residue polypeptide: Clathrin heavy chain (1694 aa).

The segment at Met-1–Tyr-478 is globular terminal domain. WD40-like repeat stretches follow at residues Ser-23 to Lys-67, Thr-68 to Pro-107, Leu-108 to Gln-149, Asn-150 to Glu-195, Gly-196 to Ala-256, Ser-257 to Glu-300, and Asn-301 to Asp-329. The interval Glu-448–Asp-464 is binding site for the uncoating ATPase, involved in lattice disassembly. Residues Tyr-479 to Asn-522 form a flexible linker region. The interval Ala-523–Phe-1694 is heavy chain arm. CHCR repeat units follow at residues Lys-537–Gln-681, Ala-687–Tyr-829, Ile-834–Asp-973, Leu-980–Cys-1125, Phe-1129–Ala-1270, Ile-1275–Asn-1421, and Leu-1424–Phe-1567. The tract at residues Ala-1214–Ala-1523 is involved in binding clathrin light chain. A trimerization region spans residues Gly-1551–Phe-1694. Positions Lys-1610–Gln-1640 form a coiled coil.

It belongs to the clathrin heavy chain family. Clathrin coats are formed from molecules containing 3 heavy chains and 3 light chains.

The protein localises to the cytoplasmic vesicle membrane. It is found in the membrane. The protein resides in the coated pit. Functionally, clathrin is the major protein of the polyhedral coat of coated pits and vesicles. The polypeptide is Clathrin heavy chain (chcA) (Dictyostelium discoideum (Social amoeba)).